The primary structure comprises 361 residues: Tyrosine--tRNA ligase (361 aa).

Residues Tyr-36, Tyr-162, Gln-166, Asp-169, and Gln-184 each coordinate L-tyrosine. A 'KMSKS' region motif is present at residues 236 to 240 (KMSKS). Lys-239 contributes to the ATP binding site.

The protein belongs to the class-I aminoacyl-tRNA synthetase family. TyrS type 4 subfamily. Homodimer.

The protein resides in the cytoplasm. The catalysed reaction is tRNA(Tyr) + L-tyrosine + ATP = L-tyrosyl-tRNA(Tyr) + AMP + diphosphate + H(+). Functionally, catalyzes the attachment of tyrosine to tRNA(Tyr) in a two-step reaction: tyrosine is first activated by ATP to form Tyr-AMP and then transferred to the acceptor end of tRNA(Tyr). This Saccharolobus islandicus (strain L.S.2.15 / Lassen #1) (Sulfolobus islandicus) protein is Tyrosine--tRNA ligase.